A 315-amino-acid chain; its full sequence is beta-hydroxyaspartate dehydratase (315 aa).

Residue K53 is modified to N6-(pyridoxal phosphate)lysine. Pyridoxal 5'-phosphate is bound by residues N80, 179-183 (GGGGM), and T303.

Pyridoxal 5'-phosphate is required as a cofactor.

It carries out the reaction (3S)-3-hydroxy-D-aspartate = iminosuccinate + H2O. In terms of biological role, catalyzes the dehydration of (2R,3S)-beta-hydroxyaspartate ((3S)-3-hydroxy-D-aspartate) into iminosuccinate. Is essential for the growth of P.denitrificans in the presence of glycolate and glyoxylate since it functions in glyoxylate assimilation via the beta-hydroxyaspartate cycle (BHAC). This is beta-hydroxyaspartate dehydratase from Paracoccus denitrificans (strain Pd 1222).